A 311-amino-acid chain; its full sequence is Protoheme IX farnesyltransferase (311 aa).

The next 8 membrane-spanning stretches (helical) occupy residues 39–59 (LLAM…PIGE), 61–81 (LPEI…AGAF), 111–131 (ALVL…VASP), 133–153 (AALF…MWSK), 162–182 (IGSV…SGDL), 187–207 (IIGL…AIAI), 246–266 (FFFV…SLIW), and 287–307 (FVFS…FSLL).

It belongs to the UbiA prenyltransferase family. Protoheme IX farnesyltransferase subfamily. As to quaternary structure, interacts with CtaA.

The protein localises to the cell membrane. It catalyses the reaction heme b + (2E,6E)-farnesyl diphosphate + H2O = Fe(II)-heme o + diphosphate. Its pathway is porphyrin-containing compound metabolism; heme O biosynthesis; heme O from protoheme: step 1/1. Functionally, converts heme B (protoheme IX) to heme O by substitution of the vinyl group on carbon 2 of heme B porphyrin ring with a hydroxyethyl farnesyl side group. This Shouchella clausii (strain KSM-K16) (Alkalihalobacillus clausii) protein is Protoheme IX farnesyltransferase.